We begin with the raw amino-acid sequence, 202 residues long: Transmembrane 4 L6 family member 4 (202 aa).

Over 1 to 9 the chain is Cytoplasmic; it reads MCTGGCARC. The chain crosses the membrane as a helical span at residues 10-30; it reads LGGTLIPLAFFGFLANILLFF. The Extracellular portion of the chain corresponds to 31–45; sequence PGGKVIDDNDHLSQE. Residues 46–66 traverse the membrane as a helical segment; sequence IWFFGGILGSGVLMIFPALVF. Over 67–93 the chain is Cytoplasmic; it reads LGLKNNDCCGCCGNEGCGKRFAMFTST. A helical transmembrane segment spans residues 94 to 114; sequence IFAVVGFLGAGYSFIISAISI. At 115-158 the chain is on the extracellular side; it reads NKGPKCLMANSTWGYPFHDGDYLNDEALWNKCREPLNVVPWNLT. 2 N-linked (GlcNAc...) asparagine glycosylation sites follow: asparagine 124 and asparagine 156. A helical transmembrane segment spans residues 159–179; it reads LFSILLVVGGIQMVLCAIQVV. At 180 to 202 the chain is on the cytoplasmic side; it reads NGLLGTLCGDCQCCGCCGGDGPV.

Belongs to the L6 tetraspanin family. Post-translationally, N-glycosylated. Glycosylation is required for the growth inhibitory effect. In terms of tissue distribution, jejunum and liver.

Its subcellular location is the membrane. In terms of biological role, regulates the adhesive and proliferative status of intestinal epithelial cells. Can mediate density-dependent cell proliferation. This chain is Transmembrane 4 L6 family member 4 (TM4SF4), found in Homo sapiens (Human).